The sequence spans 125 residues: Small ribosomal subunit protein bS6 (125 aa).

Positions 99 to 125 (ASPMVKAKDERRASAEVENNDFEDAEE) are disordered. A compositionally biased stretch (basic and acidic residues) spans 104–113 (KAKDERRASA). The span at 116-125 (ENNDFEDAEE) shows a compositional bias: acidic residues.

It belongs to the bacterial ribosomal protein bS6 family.

Its function is as follows. Binds together with bS18 to 16S ribosomal RNA. This Mannheimia succiniciproducens (strain KCTC 0769BP / MBEL55E) protein is Small ribosomal subunit protein bS6.